A 152-amino-acid chain; its full sequence is Leukocyte-associated immunoglobulin-like receptor 2 (152 aa).

An N-terminal signal peptide occupies residues 1-21; that stretch reads MSPHLTALLGLVLCLAQTIHT. The Ig-like C2-type domain maps to 29–117; sequence PSISAEPGTV…GWSEHSDFLE (89 aa). Cys49 and Cys101 are oxidised to a cystine. Positions 120 to 152 are disordered; the sequence is VKESSGGPDSPDTEPGSSAGTVPGTEASGFDAP.

The protein localises to the secreted. This is Leukocyte-associated immunoglobulin-like receptor 2 (LAIR2) from Homo sapiens (Human).